A 77-amino-acid chain; its full sequence is Acyl carrier protein (77 aa).

Residues 2–77 (SSIDKRIKEI…DAIDYITDHT (76 aa)) form the Carrier domain. Ser-37 is modified (O-(pantetheine 4'-phosphoryl)serine).

Belongs to the acyl carrier protein (ACP) family. In terms of processing, 4'-phosphopantetheine is transferred from CoA to a specific serine of apo-ACP by AcpS. This modification is essential for activity because fatty acids are bound in thioester linkage to the sulfhydryl of the prosthetic group.

It localises to the cytoplasm. It functions in the pathway lipid metabolism; fatty acid biosynthesis. Carrier of the growing fatty acid chain in fatty acid biosynthesis. In Geotalea uraniireducens (strain Rf4) (Geobacter uraniireducens), this protein is Acyl carrier protein.